Reading from the N-terminus, the 515-residue chain is Lysine--tRNA ligase (515 aa).

Glu425 and Glu432 together coordinate Mg(2+).

This sequence belongs to the class-II aminoacyl-tRNA synthetase family. In terms of assembly, homodimer. Mg(2+) serves as cofactor.

Its subcellular location is the cytoplasm. The catalysed reaction is tRNA(Lys) + L-lysine + ATP = L-lysyl-tRNA(Lys) + AMP + diphosphate. The protein is Lysine--tRNA ligase of Cupriavidus metallidurans (strain ATCC 43123 / DSM 2839 / NBRC 102507 / CH34) (Ralstonia metallidurans).